The following is a 466-amino-acid chain: SVGFKAGVKDYKLTYYTPDYVTKDTDILAAFRVTPQPGVPPEEAGAAVAAESSTGTWTTVWTDGLTSLDRYKGRCYNIEPVAGEENQYICYVAYPLDLFEEGSVTNMFTSIVGNAFGFKALRALRLEDLRIPSAYVKTFQGPPHGIQVERDKLNKYGRPLLGCTIKPKLGLSAKNYGRAVYECLRGGLDFTKDDENVNSQPFMRWRDRFLFCAEAIFKSQAETGEIKGHYLNATAGTCEEMIKRAVFARELGVPIVMHDYLTGGFTANTSLAHYCRDNGLLLHIHRAMHAVIDRQKNHGMHFRVLAKALRMSGGDHIHAGTVVGKLEGERDITLGFVDLLRDDFIEKDRSRGIYFTQDWVSLPGVLPVASGGIHVWHMPALTEIFGDDSVLQFGGGTLGHPWGNAPGAVANRVALEACVQARNEGRDLAREGNEIIREASKWSPELAAACEVWKEIKFQFEAMDTL.

Lys-5 is subject to N6,N6,N6-trimethyllysine. Asn-114 and Thr-164 together coordinate substrate. The Proton acceptor role is filled by Lys-166. Residue Lys-168 coordinates substrate. Positions 192, 194, and 195 each coordinate Mg(2+). Position 192 is an N6-carboxylysine (Lys-192). The active-site Proton acceptor is His-285. Substrate contacts are provided by Arg-286, His-318, and Ser-370.

This sequence belongs to the RuBisCO large chain family. Type I subfamily. As to quaternary structure, heterohexadecamer of 8 large chains and 8 small chains; disulfide-linked. The disulfide link is formed within the large subunit homodimers. The cofactor is Mg(2+). The disulfide bond which can form in the large chain dimeric partners within the hexadecamer appears to be associated with oxidative stress and protein turnover.

It is found in the plastid. It localises to the chloroplast. It carries out the reaction 2 (2R)-3-phosphoglycerate + 2 H(+) = D-ribulose 1,5-bisphosphate + CO2 + H2O. It catalyses the reaction D-ribulose 1,5-bisphosphate + O2 = 2-phosphoglycolate + (2R)-3-phosphoglycerate + 2 H(+). Functionally, ruBisCO catalyzes two reactions: the carboxylation of D-ribulose 1,5-bisphosphate, the primary event in carbon dioxide fixation, as well as the oxidative fragmentation of the pentose substrate in the photorespiration process. Both reactions occur simultaneously and in competition at the same active site. This Aesculus pavia (Red buckeye) protein is Ribulose bisphosphate carboxylase large chain.